The chain runs to 488 residues: Inosine-5'-monophosphate dehydrogenase (488 aa).

CBS domains follow at residues 94–150 (IVSE…SKTV) and 154–215 (MTKK…CKDE). NAD(+) contacts are provided by residues Asp-249, 249–251 (DSS), and 299–301 (GIG). K(+) contacts are provided by Gly-301 and Gly-303. Residue Ser-304 coordinates IMP. Cys-306 is a K(+) binding site. Cys-306 acts as the Thioimidate intermediate in catalysis. IMP contacts are provided by residues 339 to 341 (DGG), 362 to 363 (GS), and 386 to 390 (YRGMG). Arg-402 functions as the Proton acceptor in the catalytic mechanism. Glu-416 is a binding site for IMP. K(+)-binding residues include Glu-470, Ser-471, and His-472.

Belongs to the IMPDH/GMPR family. As to quaternary structure, homotetramer. Requires K(+) as cofactor.

The catalysed reaction is IMP + NAD(+) + H2O = XMP + NADH + H(+). Its pathway is purine metabolism; XMP biosynthesis via de novo pathway; XMP from IMP: step 1/1. Mycophenolic acid (MPA) is a non-competitive inhibitor that prevents formation of the closed enzyme conformation by binding to the same site as the amobile flap. In contrast, mizoribine monophosphate (MZP) is a competitive inhibitor that induces the closed conformation. MPA is a potent inhibitor of mammalian IMPDHs but a poor inhibitor of the bacterial enzymes. MZP is a more potent inhibitor of bacterial IMPDH. Functionally, catalyzes the conversion of inosine 5'-phosphate (IMP) to xanthosine 5'-phosphate (XMP), the first committed and rate-limiting step in the de novo synthesis of guanine nucleotides, and therefore plays an important role in the regulation of cell growth. The polypeptide is Inosine-5'-monophosphate dehydrogenase (Haemophilus influenzae (strain ATCC 51907 / DSM 11121 / KW20 / Rd)).